Reading from the N-terminus, the 1285-residue chain is Peroxisomal ATPase PEX1 (1285 aa).

Residues Q344–M353 are compositionally biased toward polar residues. A disordered region spans residues Q344–D373. Phosphoserine is present on S354. A compositionally biased stretch (basic and acidic residues) spans P355 to D373. Residues G601–S608 and G883–T890 contribute to the ATP site. Residues N1142–Q1161 are compositionally biased toward polar residues. The disordered stretch occupies residues N1142–D1162. A phosphoserine mark is found at S1183, S1211, and S1213. The interval F1262–A1285 is disordered.

Belongs to the AAA ATPase family. Homooligomer; homooligomerizes in the cytosol, interaction with PEX6 promotes dissociation of the homooligomer. Interacts with PEX6; forming the PEX1-PEX6 AAA ATPase complex, which is composed of a heterohexamer formed by a trimer of PEX1-PEX6 dimers. Interacts indirectly with PEX26, via its interaction with PEX6.

The protein resides in the cytoplasm. Its subcellular location is the cytosol. It is found in the peroxisome membrane. It carries out the reaction ATP + H2O = ADP + phosphate + H(+). Its function is as follows. Component of the PEX1-PEX6 AAA ATPase complex, a protein dislocase complex that mediates the ATP-dependent extraction of the PEX5 receptor from peroxisomal membranes, an essential step for PEX5 recycling. Specifically recognizes PEX5 monoubiquitinated at 'Cys-11', and pulls it out of the peroxisome lumen through the PEX2-PEX10-PEX12 retrotranslocation channel. Extraction by the PEX1-PEX6 AAA ATPase complex is accompanied by unfolding of the TPR repeats and release of bound cargo from PEX5. The chain is Peroxisomal ATPase PEX1 from Cricetulus griseus (Chinese hamster).